We begin with the raw amino-acid sequence, 276 residues long: NADPH-dependent 7-cyano-7-deazaguanine reductase (276 aa).

Residue 83 to 85 (IES) participates in substrate binding. An NADPH-binding site is contributed by 85–86 (SK). Residue cysteine 184 is the Thioimide intermediate of the active site. The Proton donor role is filled by aspartate 191. Substrate is bound at residue 223–224 (HE). 252–253 (RG) lines the NADPH pocket.

The protein belongs to the GTP cyclohydrolase I family. QueF type 2 subfamily. Homodimer.

It is found in the cytoplasm. It carries out the reaction 7-aminomethyl-7-carbaguanine + 2 NADP(+) = 7-cyano-7-deazaguanine + 2 NADPH + 3 H(+). Its pathway is tRNA modification; tRNA-queuosine biosynthesis. Its function is as follows. Catalyzes the NADPH-dependent reduction of 7-cyano-7-deazaguanine (preQ0) to 7-aminomethyl-7-deazaguanine (preQ1). In Pseudomonas entomophila (strain L48), this protein is NADPH-dependent 7-cyano-7-deazaguanine reductase.